The primary structure comprises 95 residues: UPF0358 protein BA_4159/GBAA_4159/BAS3861 (95 aa).

Belongs to the UPF0358 family.

This chain is UPF0358 protein BA_4159/GBAA_4159/BAS3861, found in Bacillus anthracis.